A 169-amino-acid chain; its full sequence is Crossover junction endodeoxyribonuclease RuvC (169 aa).

Catalysis depends on residues Asp11, Glu71, and Asp143. Asp11, Glu71, and Asp143 together coordinate Mg(2+).

It belongs to the RuvC family. As to quaternary structure, homodimer which binds Holliday junction (HJ) DNA. The HJ becomes 2-fold symmetrical on binding to RuvC with unstacked arms; it has a different conformation from HJ DNA in complex with RuvA. In the full resolvosome a probable DNA-RuvA(4)-RuvB(12)-RuvC(2) complex forms which resolves the HJ. Mg(2+) serves as cofactor.

Its subcellular location is the cytoplasm. It catalyses the reaction Endonucleolytic cleavage at a junction such as a reciprocal single-stranded crossover between two homologous DNA duplexes (Holliday junction).. The RuvA-RuvB-RuvC complex processes Holliday junction (HJ) DNA during genetic recombination and DNA repair. Endonuclease that resolves HJ intermediates. Cleaves cruciform DNA by making single-stranded nicks across the HJ at symmetrical positions within the homologous arms, yielding a 5'-phosphate and a 3'-hydroxyl group; requires a central core of homology in the junction. The consensus cleavage sequence is 5'-(A/T)TT(C/G)-3'. Cleavage occurs on the 3'-side of the TT dinucleotide at the point of strand exchange. HJ branch migration catalyzed by RuvA-RuvB allows RuvC to scan DNA until it finds its consensus sequence, where it cleaves and resolves the cruciform DNA. The polypeptide is Crossover junction endodeoxyribonuclease RuvC (Bartonella henselae (strain ATCC 49882 / DSM 28221 / CCUG 30454 / Houston 1) (Rochalimaea henselae)).